The chain runs to 443 residues: Probable glycine dehydrogenase (decarboxylating) subunit 1 (443 aa).

The protein belongs to the GcvP family. N-terminal subunit subfamily. The glycine cleavage system is composed of four proteins: P, T, L and H. In this organism, the P 'protein' is a heterodimer of two subunits.

It carries out the reaction N(6)-[(R)-lipoyl]-L-lysyl-[glycine-cleavage complex H protein] + glycine + H(+) = N(6)-[(R)-S(8)-aminomethyldihydrolipoyl]-L-lysyl-[glycine-cleavage complex H protein] + CO2. Its function is as follows. The glycine cleavage system catalyzes the degradation of glycine. The P protein binds the alpha-amino group of glycine through its pyridoxal phosphate cofactor; CO(2) is released and the remaining methylamine moiety is then transferred to the lipoamide cofactor of the H protein. This Koribacter versatilis (strain Ellin345) protein is Probable glycine dehydrogenase (decarboxylating) subunit 1.